The primary structure comprises 320 residues: N-acetylneuraminate lyase (320 aa).

Aceneuramate-binding residues include Thr-51 and Thr-52. The active-site Proton donor is Tyr-143. The active-site Schiff-base intermediate with substrate is Lys-173. Aceneuramate-binding residues include Thr-175, Gly-199, Asp-201, Glu-202, and Ser-218. Ser-308 is modified (phosphoserine).

This sequence belongs to the DapA family. NanA subfamily. Homotetramer.

It is found in the cytoplasm. It catalyses the reaction aceneuramate = aldehydo-N-acetyl-D-mannosamine + pyruvate. It participates in amino-sugar metabolism; N-acetylneuraminate degradation. In terms of biological role, catalyzes the cleavage of N-acetylneuraminic acid (sialic acid) to form pyruvate and N-acetylmannosamine via a Schiff base intermediate. It prevents sialic acids from being recycled and returning to the cell surface. Involved in the N-glycolylneuraminic acid (Neu5Gc) degradation pathway. The sequence is that of N-acetylneuraminate lyase from Mus musculus (Mouse).